An 890-amino-acid chain; its full sequence is UPF0182 protein Ppro_2689 (890 aa).

A run of 7 helical transmembrane segments spans residues 6 to 26, 50 to 70, 102 to 122, 157 to 177, 200 to 220, 244 to 264, and 266 to 286; these read FILILVIVALTVSLLSFLLAF, AGSGLLFAGVLFAGTLLNLLL, LGIPACAILALLVGQWGAMQW, TITAFAGFTLLTSLFLTVLVY, LAILLLLLSCVIAAGFHLDCF, TYRILTILAPLAGTALAIGLW, and GAWRMALLAPLAVIVLHVIGI.

The protein belongs to the UPF0182 family.

It is found in the cell membrane. The sequence is that of UPF0182 protein Ppro_2689 from Pelobacter propionicus (strain DSM 2379 / NBRC 103807 / OttBd1).